A 477-amino-acid chain; its full sequence is Cysteine--tRNA ligase (477 aa).

Residue Cys-34 participates in Zn(2+) binding. A 'HIGH' region motif is present at residues 36 to 46 (PTVYDFAHIGN). Positions 235, 260, and 264 each coordinate Zn(2+). Residues 293–297 (KMSKS) carry the 'KMSKS' region motif. Lys-296 contacts ATP.

It belongs to the class-I aminoacyl-tRNA synthetase family. In terms of assembly, monomer. Zn(2+) serves as cofactor.

Its subcellular location is the cytoplasm. The enzyme catalyses tRNA(Cys) + L-cysteine + ATP = L-cysteinyl-tRNA(Cys) + AMP + diphosphate. The chain is Cysteine--tRNA ligase from Mesorhizobium japonicum (strain LMG 29417 / CECT 9101 / MAFF 303099) (Mesorhizobium loti (strain MAFF 303099)).